The following is a 129-amino-acid chain: NADPH-dependent 7-cyano-7-deazaguanine reductase (129 aa).

The Thioimide intermediate role is filled by Cys-34. Asp-41 (proton donor) is an active-site residue. Substrate-binding positions include 56 to 58 and 75 to 76; these read VEL and HE.

It belongs to the GTP cyclohydrolase I family. QueF type 1 subfamily.

Its subcellular location is the cytoplasm. The catalysed reaction is 7-aminomethyl-7-carbaguanine + 2 NADP(+) = 7-cyano-7-deazaguanine + 2 NADPH + 3 H(+). It participates in tRNA modification; tRNA-queuosine biosynthesis. In terms of biological role, catalyzes the NADPH-dependent reduction of 7-cyano-7-deazaguanine (preQ0) to 7-aminomethyl-7-deazaguanine (preQ1). The sequence is that of NADPH-dependent 7-cyano-7-deazaguanine reductase from Alkalilimnicola ehrlichii (strain ATCC BAA-1101 / DSM 17681 / MLHE-1).